Consider the following 269-residue polypeptide: Energy-coupling factor transporter ATP-binding protein EcfA1 (269 aa).

The 235-residue stretch at 8–242 (IVFKNVSFQY…AEELTTIGLD (235 aa)) folds into the ABC transporter domain. Residue 42-49 (GHNGSGKS) coordinates ATP.

It belongs to the ABC transporter superfamily. Energy-coupling factor EcfA family. As to quaternary structure, forms a stable energy-coupling factor (ECF) transporter complex composed of 2 membrane-embedded substrate-binding proteins (S component), 2 ATP-binding proteins (A component) and 2 transmembrane proteins (T component).

It is found in the cell membrane. Functionally, ATP-binding (A) component of a common energy-coupling factor (ECF) ABC-transporter complex. Unlike classic ABC transporters this ECF transporter provides the energy necessary to transport a number of different substrates. The chain is Energy-coupling factor transporter ATP-binding protein EcfA1 from Staphylococcus aureus (strain MSSA476).